A 911-amino-acid chain; its full sequence is Translation initiation factor IF-2 (911 aa).

Basic and acidic residues-rich tracts occupy residues 80-94 (LEEQ…EQQL) and 101-113 (RPER…RTEV). 3 disordered regions span residues 80 to 142 (LEEQ…VSEP), 153 to 172 (VKSP…DVEG), and 195 to 309 (SSLG…KMRK). The segment covering 214–256 (KEQADELKDEFDIKAKEGGKEREAGGESRKPVKKGSEETKKTT) has biased composition (basic and acidic residues). The segment covering 262-272 (AKKKKGKKKKK) has biased composition (basic residues). The segment covering 273-284 (PEVDEKTIEKNI) has biased composition (basic and acidic residues). Over residues 286–300 (STISGMDDTSGSGSS) the composition is skewed to low complexity. The region spanning 408 to 578 (IRPPVVTIMG…LTEAEIRELK (171 aa)) is the tr-type G domain. The interval 417–424 (GHVDHGKT) is G1. 417–424 (GHVDHGKT) contributes to the GTP binding site. A G2 region spans residues 442 to 446 (GITQH). Residues 464-467 (DTPG) are G3. GTP contacts are provided by residues 464 to 468 (DTPGH) and 518 to 521 (NKID). The tract at residues 518-521 (NKID) is G4. Positions 554-556 (SAK) are G5.

Belongs to the TRAFAC class translation factor GTPase superfamily. Classic translation factor GTPase family. IF-2 subfamily.

The protein localises to the cytoplasm. One of the essential components for the initiation of protein synthesis. Protects formylmethionyl-tRNA from spontaneous hydrolysis and promotes its binding to the 30S ribosomal subunits. Also involved in the hydrolysis of GTP during the formation of the 70S ribosomal complex. This is Translation initiation factor IF-2 from Chlorobium phaeobacteroides (strain BS1).